The sequence spans 332 residues: Divalent cation transporter CmaX (332 aa).

At 1 to 277 (MQAYESGDER…MNRTMYLLGI (277 aa)) the chain is on the cytoplasmic side. The chain crosses the membrane as a helical span at residues 278–286 (ITGFFLPMS). At 287–307 (FVTGLLGINVGGIPGADAPHG) the chain is on the periplasmic side. A helical membrane pass occupies residues 308 to 323 (FWLACLLIGGVATFQW). The Cytoplasmic segment spans residues 324–332 (WVFRRLRWL).

Belongs to the CorA metal ion transporter (MIT) (TC 1.A.35) family. Homopentamer.

It is found in the cell inner membrane. It carries out the reaction Zn(2+)(in) = Zn(2+)(out). The catalysed reaction is Cd(2+)(in) = Cd(2+)(out). It catalyses the reaction Ni(2+)(in) = Ni(2+)(out). The enzyme catalyses Co(2+)(in) = Co(2+)(out). In terms of biological role, transports divalent cations including Zn(2+), Cd(2+), Ni(2+) and Co(2+). The proton gradient has a small influence on transport suggesting that the transport is probably not proton-dependent. The polypeptide is Divalent cation transporter CmaX (Pseudomonas aeruginosa (strain ATCC 15692 / DSM 22644 / CIP 104116 / JCM 14847 / LMG 12228 / 1C / PRS 101 / PAO1)).